Reading from the N-terminus, the 455-residue chain is MFS-type transporter SLC18B1 (455 aa).

Methionine 1 is subject to N-acetylmethionine. The tract at residues 1–26 (MDTAGPPAPAGTEGDGPGGSTGETSR) is disordered. Residues 1–32 (MDTAGPPAPAGTEGDGPGGSTGETSRRLSKEQ) are Cytoplasmic-facing. Serine 20 bears the Phosphoserine mark. A helical membrane pass occupies residues 33 to 53 (IFVLVSAASMNLGCMMTYSIL). The Extracellular portion of the chain corresponds to 54 to 69 (GPFFPKEAEKKGASNT). A helical membrane pass occupies residues 70-90 (TIGMIFGCYALFELLASLVFG). Topologically, residues 91-99 (KYLVHIGAK) are cytoplasmic. The helical transmembrane segment at 100 to 120 (FMFIAGMFVSGGVTILFGVLD) threads the bilayer. Residues 121 to 126 (QLPEGP) lie on the Extracellular side of the membrane. The helical transmembrane segment at 127–147 (IFIAMCFLVRIVDAIGFGAAI) threads the bilayer. Residues 148 to 166 (TASSSILAKAFPNNVATVM) are Cytoplasmic-facing. The helical transmembrane segment at 167-187 (GSLEVFSGLGLVAGPPLGGLL) threads the bilayer. At 188-194 (YQSFGYE) the chain is on the extracellular side. Residues 195–215 (VPFIFLGCIVLLMIPLNLCIL) form a helical membrane-spanning segment. The Cytoplasmic portion of the chain corresponds to 216–232 (PSYESDAGKQSFWKLVT). Residues 233–253 (LPKIGLIAFVIISLSSCFGFL) traverse the membrane as a helical segment. The Extracellular segment spans residues 254-271 (DPTLSLFVMKKFSLSTGY). The chain crosses the membrane as a helical span at residues 272–292 (VGLVFLGLSLSYAISSPLFGL). The Cytoplasmic portion of the chain corresponds to 293–303 (LSDKMPNLRKW). The chain crosses the membrane as a helical span at residues 304 to 324 (FLVFGNLITAGCYMLLGPIPL). The Extracellular portion of the chain corresponds to 325–330 (LHIKSQ). A helical membrane pass occupies residues 331-351 (LWLLVLVLVINGVSAGMSIIP). Over 352 to 376 (TFPEMLSCAYANGFEDGISTLGLVS) the chain is Cytoplasmic. A helical membrane pass occupies residues 377-397 (GLFGAMWSVGAFMGPILGGFL). Over 398 to 406 (CEKIGFEWA) the chain is Extracellular. Residues 407–427 (AAIQGLWTLLSGVAMALFYLW) traverse the membrane as a helical segment. Over 428 to 455 (EDSTMRRSKAQNILGTEEEQAALLPNDT) the chain is Cytoplasmic.

In terms of tissue distribution, expressed in brain structures, particularly in hippocampus, cortex, and cerebellum (at protein level). Expressed in astrocytes and hippocampal neurons (at protein level). Expressed in peritoneal mast cells.

The protein resides in the cytoplasmic vesicle. The protein localises to the secretory vesicle membrane. It is found in the secretory vesicle. Its subcellular location is the synaptic vesicle membrane. It catalyses the reaction spermine(in) + n H(+)(out) = spermine(out) + n H(+)(in). The enzyme catalyses spermidine(in) + n H(+)(out) = spermidine(out) + n H(+)(in). It carries out the reaction serotonin(in) + n H(+)(out) = serotonin(out) + n H(+)(in). Its function is as follows. Proton-coupled polyamine antiporter involved in the translocation of polyamines from cytosol into secretory vesicles prior to their release via exocytosis. Uses the electrochemical proton gradient generated by a V-type proton-pumping ATPase to couple the efflux of protons with the uptake of a polyamine molecule. Facilitates vesicular storage of spermine and spermidine in astrocytes with an impact on glutamatergic neuronal transmission and memory formation. Upon antigen stimulation, regulates polyamine accumulation and release in mast cell secretory granules, which in turn potentiates mast cell degranulation and histamine secretion. This chain is MFS-type transporter SLC18B1, found in Rattus norvegicus (Rat).